A 416-amino-acid polypeptide reads, in one-letter code: Casein kinase I isoform epsilon (416 aa).

The Protein kinase domain occupies 9 to 277; sequence YRLGRKIGSG…YLRQLFRNLF (269 aa). ATP contacts are provided by residues 15–23 and Lys38; that span reads IGSGSFGDI. Asp128 (proton acceptor) is an active-site residue. The segment covering 301–318 has biased composition (basic and acidic residues); it reads PEDMDRERREHEREERMG. Positions 301 to 416 are disordered; it reads PEDMDRERRE…TSVPFDHLGK (116 aa). Low complexity predominate over residues 324–338; sequence ATRALPPGPPAGATG. Polar residues-rich tracts occupy residues 350–365 and 400–409; these read STPT…TSPR and SRISASQTSV.

The protein belongs to the protein kinase superfamily. CK1 Ser/Thr protein kinase family. Casein kinase I subfamily. In terms of assembly, monomer. Component of the circadian core oscillator, which includes the CRY proteins, CLOCK, or NPAS2, BMAL1 or BMAL2, CSNK1E, and the PER proteins.

Its subcellular location is the cytoplasm. It catalyses the reaction L-seryl-[protein] + ATP = O-phospho-L-seryl-[protein] + ADP + H(+). It carries out the reaction L-threonyl-[protein] + ATP = O-phospho-L-threonyl-[protein] + ADP + H(+). Functionally, casein kinases are operationally defined by their preferential utilization of acidic proteins such as caseins as substrates. Can phosphorylate a large number of proteins. Participates in Wnt signaling. Phosphorylates DVL1. Central component of the circadian clock. May act as a negative regulator of circadian rhythmicity by phosphorylating PER1 and PER2. Retains PER1 in the cytoplasm. The chain is Casein kinase I isoform epsilon (CSNK1E) from Gallus gallus (Chicken).